The following is a 98-amino-acid chain: NADH-ubiquinone oxidoreductase chain 4L (98 aa).

The next 3 helical transmembrane spans lie at 1-21 (MSMVYINIFLAFTLSFMGLLI), 30-50 (LLCLEGMMLSLFVMMTVTILT), and 61-81 (IILLVFAACEAALGLSLLVMI).

This sequence belongs to the complex I subunit 4L family. As to quaternary structure, core subunit of respiratory chain NADH dehydrogenase (Complex I) which is composed of 45 different subunits.

It localises to the mitochondrion inner membrane. The enzyme catalyses a ubiquinone + NADH + 5 H(+)(in) = a ubiquinol + NAD(+) + 4 H(+)(out). Functionally, core subunit of the mitochondrial membrane respiratory chain NADH dehydrogenase (Complex I) which catalyzes electron transfer from NADH through the respiratory chain, using ubiquinone as an electron acceptor. Part of the enzyme membrane arm which is embedded in the lipid bilayer and involved in proton translocation. The chain is NADH-ubiquinone oxidoreductase chain 4L (MT-ND4L) from Gulo gulo (Wolverine).